Consider the following 113-residue polypeptide: N(2)-fixation sustaining protein CowN (113 aa).

This sequence belongs to the CowN family.

Its function is as follows. Is required to sustain N(2)-dependent growth in the presence of low levels of carbon monoxide (CO). Probably acts by protecting the N(2) fixation ability of the nitrogenase complex, which is inactivated in the presence of CO. This is N(2)-fixation sustaining protein CowN from Wolinella succinogenes (strain ATCC 29543 / DSM 1740 / CCUG 13145 / JCM 31913 / LMG 7466 / NCTC 11488 / FDC 602W) (Vibrio succinogenes).